A 174-amino-acid polypeptide reads, in one-letter code: Repair DNA polymerase X (174 aa).

An involved in ssDNA binding region spans residues 42-51 (REEKMLNDVD). Mg(2+) is bound by residues D49 and D51. A disulfide bridge connects residues C81 and C86. Residue D100 participates in Mg(2+) binding.

It belongs to the DNA polymerase type-X family. Mg(2+) serves as cofactor.

It is found in the virion. It carries out the reaction DNA(n) + a 2'-deoxyribonucleoside 5'-triphosphate = DNA(n+1) + diphosphate. Functionally, error-prone polymerase lacking a proofreading 3'-5' exonuclease which catalyzes the gap-filling reaction during the DNA repair process. Specifically binds intermediates in the single-nucleotide base-excision repair process. Also catalyzes DNA polymerization with low nucleotide-insertion fidelity. Probably acts as a strategic DNA mutase, which gives rise to a rapid emergence of variants. Generates mismatched G-G pairs, in that case, the polymerase first binds the deoxynucleotide followed by mismatch formation. Together with the viral DNA ligase, fills the single nucleotide gaps generated by the AP endonuclease. Binds DNA with high affinity via the helix alphaE. This Ornithodoros (relapsing fever ticks) protein is Repair DNA polymerase X.